The primary structure comprises 551 residues: Hyaluronan synthase 2 (551 aa).

The Cytoplasmic portion of the chain corresponds to 1 to 11; sequence MHCERFICILR. The helical transmembrane segment at 12-32 threads the bilayer; the sequence is IIGTTLFGVSLLLGISAAYIV. Topologically, residues 33-45 are extracellular; that stretch reads GYQFIQTDNYYFS. Residues 46-66 form a helical membrane-spanning segment; sequence FGLYGAILALHLIIQSLFAFL. Residues 67-374 lie on the Cytoplasmic side of the membrane; the sequence is EHRKMKRSLE…NSLWFHKHHL (308 aa). Residues 375–395 traverse the membrane as a helical segment; it reads WMTYEAVITGFFPFFLIATVI. Residues 396-402 are Extracellular-facing; that stretch reads QLFYRGR. Residues 403 to 423 traverse the membrane as a helical segment; it reads IWNILLFLLTVQLVGLIKSSF. The Cytoplasmic segment spans residues 424–429; it reads ASALRG. A helical transmembrane segment spans residues 430-450; it reads NIVMVFMSFYSVLYMSSLLPA. Over 451–470 the chain is Extracellular; it reads KMFAIATINKAGWGTSGRKT. A helical membrane pass occupies residues 471–491; sequence IVVNFIGLIPITVWFTILLGG. The Cytoplasmic portion of the chain corresponds to 492–509; sequence VCYTIWRETKKPFSESEK. The helical transmembrane segment at 510–530 threads the bilayer; that stretch reads IVLAVGAILYACYWVMLLTMY. Topologically, residues 531-551 are extracellular; it reads VSLVMKCGRRRKEPQHDLVLA.

The protein belongs to the NodC/HAS family. In terms of assembly, homodimer; dimerization promotes enzymatic activity. It depends on Mg(2+) as a cofactor.

It localises to the cell membrane. It is found in the endoplasmic reticulum membrane. The protein resides in the vesicle. Its subcellular location is the golgi apparatus membrane. The protein localises to the lysosome. It carries out the reaction [hyaluronan](n) + UDP-N-acetyl-alpha-D-glucosamine = N-acetyl-beta-D-glucosaminyl-(1-&gt;4)-[hyaluronan](n) + UDP + H(+). The enzyme catalyses N-acetyl-beta-D-glucosaminyl-(1-&gt;4)-[hyaluronan](n) + UDP-alpha-D-glucuronate = [hyaluronan](n+1) + UDP + H(+). The protein operates within glycan biosynthesis; hyaluronan biosynthesis. Catalyzes the addition of GlcNAc or GlcUA monosaccharides to the nascent hyaluronan polymer. Therefore, it is essential to hyaluronan synthesis a major component of most extracellular matrices that has a structural role in tissues architectures and regulates cell adhesion, migration and differentiation. This is one of three isoenzymes responsible for cellular hyaluronan synthesis and it is particularly responsible for the synthesis of high molecular mass hyaluronan. This Xenopus laevis (African clawed frog) protein is Hyaluronan synthase 2 (has2).